The primary structure comprises 368 residues: tRNA/tmRNA (uracil-C(5))-methyltransferase (368 aa).

S-adenosyl-L-methionine contacts are provided by Gln190, Tyr218, Asn223, Glu239, and Asp301. Cys326 acts as the Nucleophile in catalysis. The active-site Proton acceptor is Glu360.

This sequence belongs to the class I-like SAM-binding methyltransferase superfamily. RNA M5U methyltransferase family. TrmA subfamily.

The catalysed reaction is uridine(54) in tRNA + S-adenosyl-L-methionine = 5-methyluridine(54) in tRNA + S-adenosyl-L-homocysteine + H(+). It carries out the reaction uridine(341) in tmRNA + S-adenosyl-L-methionine = 5-methyluridine(341) in tmRNA + S-adenosyl-L-homocysteine + H(+). In terms of biological role, dual-specificity methyltransferase that catalyzes the formation of 5-methyluridine at position 54 (m5U54) in all tRNAs, and that of position 341 (m5U341) in tmRNA (transfer-mRNA). The protein is tRNA/tmRNA (uracil-C(5))-methyltransferase of Aliivibrio fischeri (strain MJ11) (Vibrio fischeri).